Here is a 331-residue protein sequence, read N- to C-terminus: Mucin-15 (331 aa).

A signal peptide spans 1–22 (MLTLAKIALISSLFISLPFARP). Residues 23 to 233 (QKQNPRRNVT…SDTPKENKNT (211 aa)) lie on the Extracellular side of the membrane. N-linked (GlcNAc...) asparagine glycans are attached at residues asparagine 30, asparagine 44, asparagine 54, asparagine 59, asparagine 75, asparagine 84, asparagine 120, asparagine 136, asparagine 145, asparagine 152, asparagine 215, and asparagine 222. Over residues 124 to 162 (ADANPLQVSEHSNSTNSPSPENFTWSLDNDTMNSPEDIS) the composition is skewed to polar residues. The tract at residues 124 to 186 (ADANPLQVSE…VTPFTAEPTE (63 aa)) is disordered. A helical transmembrane segment spans residues 234–254 (GIVFGAILGAILGASLLSLVG). The Cytoplasmic segment spans residues 255 to 331 (YLLCGQRKTD…DAIPPLRPSI (77 aa)). The tract at residues 302 to 331 (AVSDSSMPEGGESLQDGIPMDAIPPLRPSI) is disordered.

Highly glycosylated (N- and O-linked carbohydrates).

It is found in the membrane. The chain is Mucin-15 (Muc15) from Mus musculus (Mouse).